We begin with the raw amino-acid sequence, 590 residues long: UvrABC system protein C (590 aa).

The GIY-YIG domain occupies D14–V91. The UVR domain occupies N196–T231.

This sequence belongs to the UvrC family. As to quaternary structure, interacts with UvrB in an incision complex.

It is found in the cytoplasm. Its function is as follows. The UvrABC repair system catalyzes the recognition and processing of DNA lesions. UvrC both incises the 5' and 3' sides of the lesion. The N-terminal half is responsible for the 3' incision and the C-terminal half is responsible for the 5' incision. In Bacillus velezensis (strain DSM 23117 / BGSC 10A6 / LMG 26770 / FZB42) (Bacillus amyloliquefaciens subsp. plantarum), this protein is UvrABC system protein C.